Consider the following 506-residue polypeptide: Subtilisin-like serine protease Cur l 4.0101 (506 aa).

An N-terminal signal peptide occupies residues 1–15; the sequence is MKYSLIAALPALAAA. Positions 16–135 are cleaved as a propeptide — removed in mature form; it reads SPTFSTETIH…IERDSEVRIL (120 aa). The region spanning 43–134 is the Inhibitor I9 domain; the sequence is SYMVVFKKHV…YIERDSEVRI (92 aa). The segment at 59–79 is disordered; the sequence is HDWVQSVHSKNTQERMELRKR. Positions 69 to 79 are enriched in basic and acidic residues; it reads NTQERMELRKR. Positions 147-453 constitute a Peptidase S8 domain; the sequence is PWGLARISHR…GGSSNYTDII (307 aa). Catalysis depends on charge relay system residues aspartate 183 and histidine 215. N-linked (GlcNAc...) asparagine glycans are attached at residues asparagine 245 and asparagine 285. Serine 381 functions as the Charge relay system in the catalytic mechanism. Residue asparagine 448 is glycosylated (N-linked (GlcNAc...) asparagine). Positions 459–506 are cleaved as a propeptide — removed in mature form; the sequence is TVKKAASKEEEKESEFRITIPSLSELEDDFEKAKESAGRKAHHVGGKL.

It belongs to the peptidase S8 family.

Functionally, serine protease. This chain is Subtilisin-like serine protease Cur l 4.0101, found in Cochliobolus lunatus (Filamentous fungus).